We begin with the raw amino-acid sequence, 309 residues long: Cytochrome c biogenesis protein CcsA (309 aa).

Transmembrane regions (helical) follow at residues L18 to F38, L48 to S68, I73 to L93, I102 to L122, V148 to I168, S216 to N236, T250 to I267, and L279 to I299.

This sequence belongs to the CcmF/CycK/Ccl1/NrfE/CcsA family. May interact with ccs1.

The protein resides in the cellular thylakoid membrane. Functionally, required during biogenesis of c-type cytochromes (cytochrome c6 and cytochrome f) at the step of heme attachment. The protein is Cytochrome c biogenesis protein CcsA of Prochlorococcus marinus (strain AS9601).